Reading from the N-terminus, the 264-residue chain is Thymidylate synthase (264 aa).

Arginine 21 contributes to the dUMP binding site. Histidine 51 provides a ligand contact to (6R)-5,10-methylene-5,6,7,8-tetrahydrofolate. 126 to 127 (RR) provides a ligand contact to dUMP. Catalysis depends on cysteine 146, which acts as the Nucleophile. DUMP contacts are provided by residues 166–169 (RSAD), asparagine 177, and 207–209 (HLY). Aspartate 169 is a (6R)-5,10-methylene-5,6,7,8-tetrahydrofolate binding site. A (6R)-5,10-methylene-5,6,7,8-tetrahydrofolate-binding site is contributed by serine 263.

The protein belongs to the thymidylate synthase family. Bacterial-type ThyA subfamily. As to quaternary structure, homodimer.

The protein resides in the cytoplasm. It catalyses the reaction dUMP + (6R)-5,10-methylene-5,6,7,8-tetrahydrofolate = 7,8-dihydrofolate + dTMP. It participates in pyrimidine metabolism; dTTP biosynthesis. Catalyzes the reductive methylation of 2'-deoxyuridine-5'-monophosphate (dUMP) to 2'-deoxythymidine-5'-monophosphate (dTMP) while utilizing 5,10-methylenetetrahydrofolate (mTHF) as the methyl donor and reductant in the reaction, yielding dihydrofolate (DHF) as a by-product. This enzymatic reaction provides an intracellular de novo source of dTMP, an essential precursor for DNA biosynthesis. The polypeptide is Thymidylate synthase (Shouchella clausii (strain KSM-K16) (Alkalihalobacillus clausii)).